Consider the following 105-residue polypeptide: Small ribosomal subunit protein uS10 (105 aa).

The protein belongs to the universal ribosomal protein uS10 family. Part of the 30S ribosomal subunit.

Functionally, involved in the binding of tRNA to the ribosomes. This Synechococcus elongatus (strain ATCC 33912 / PCC 7942 / FACHB-805) (Anacystis nidulans R2) protein is Small ribosomal subunit protein uS10.